The chain runs to 391 residues: Terminal nucleotidyltransferase 5C (391 aa).

It belongs to the TENT family. In terms of assembly, interacts with BCCIP and PABPC1; the interaction has no effect on TENT5C poly(A) polymerase function. Interacts with PLK4; this interaction leads to the TENT5C recruitment into the centrosome.

The protein resides in the nucleus. The protein localises to the cytoplasm. Its subcellular location is the cytoskeleton. It is found in the microtubule organizing center. It localises to the centrosome. The catalysed reaction is RNA(n) + ATP = RNA(n)-3'-adenine ribonucleotide + diphosphate. In terms of biological role, catalyzes the transfer of one adenosine molecule from an ATP to an mRNA poly(A) tail bearing a 3'-OH terminal group and enhances mRNA stability and gene expression. Can also elongate RNA oligos ending with uridine molecule, provided that the sequence is adenosine-rich. Mainly targets mRNAs encoding endoplasmic reticulum-targeted protein. The polypeptide is Terminal nucleotidyltransferase 5C (Macaca fascicularis (Crab-eating macaque)).